A 1393-amino-acid chain; its full sequence is MLSRPKPGESEVDLLHFQSQFLAAGAAPAVQLVKKGNRGGGDANSDRPPLQDHRDVVMLDNLPDLPPALVPSPPKRARPSPGHCLPEDEDPEERLRRHDQHITAVLTKIIERDTSSVAVNLPVPSGVAFPAVFLRSRDTQGKSATSGKRSIFAQEIAARRIAEAKGPSVGEVVPNVGPPEGAVTCETPTPRNQGCQLPGSSHSFQGPNLVTGKGLRDQEAEQEAQTIHEENIARLQAMAPEEILQEQQRLLAQLDPSLVAFLRSHSHTQEQTGETASEEQRPGGPSANVTKEEPLMSAFASEPRKRDKLEPEAPALALPVTPQKEWLHMDTVELEKLHWTQDLPPVRRQQTQERMQARFSLQGELLAPDVDLPTHLGLHHHGEEAERAGYSLQELFHLTRSQVSQQRALALHVLAQVISRAQAGEFGDRLAGSVLSLLLDAGFLFLLRFSLDDRVDGVIATAIRALRALLVAPGDEELLDSTFSWYHGALTFPLMPSQEDKEDEDEDEECPAGKAKRKSPEEESRPPPDLARHDVIKGLLATSLLPRLRYVLEVTYPGPAVVLDILAVLIRLARHSLESATRVLECPRLIETIVREFLPTSWSPVGAGPTPSLYKVPCATAMKLLRVLASAGRNIAARLLSSFDLRSRLCRIIAEAPQELALPPEEAEMLSTEALRLWAVAASYGQGGYLYRELYPVLMRALQVVPRELSTHPPQPLSMQRIASLLTLLTQLTLAAGSTPAETISDSAEASLSATPSLVTWTQVSGLQPLVEPCLRQTLKLLSRPEMWRAVGPVPVACLLFLGAYYQAWSQQPSSCPEDWLQDMQRLSEELLLPLLSQPTLGSLWDSLRHCSLLCNPLSCVPALEAPPSLVSLGCSGGCPRLSLAGSASPFPFLTALLSLLNTLAQIHKGLCGQLAAILAAPGLQNYFLQCVAPGAAPHLTPFSAWALRHEYHLQYLALALAQKAAALQPLPATHAALYHGMALALLSRLLPGSEYLTHELLLSCVFRLEFLPERTSGGPEAADFSDQLSLGSSRVPRCGQGTLLAQACQDLPSIRNCYLTHCSPARASLLASQALHRGELQRVPTLLLPMPTEPLLPTDWPFLPLIRLYHRASDTPSGLSPTDTMGTAMRVLQWVLVLESWRPQALWAVPPAARLARLMCVFLVDSELFRESPVQHLVAALLAQLCQPQVLPNLNLDCRLPGLTSFPDLYANFLDHFEAVSFGDHLFGALVLLPLQRRFSVTLRLALFGEHVGALRALSLPLTQLPVSLECYTVPPEDNLALLQLYFRTLVTGALRPRWCPVLYAVAVAHVNSFIFSQDPQSSDEVKAARRSMLQKTWLLADEGLRQHLLHYKLPNSTLPEGFELYSQLPPLRQHYLQRLTSTVLQNGVSET.

3 disordered regions span residues 34-53 (KKGN…LQDH), 61-94 (NLPD…PEER), and 266-295 (SHTQ…EEPL). The span at 64-74 (DLPPALVPSPP) shows a compositional bias: pro residues. At serine 72 the chain carries Phosphoserine. Threonine 321 is subject to Phosphothreonine. The interval 496–531 (PSQEDKEDEDEDEECPAGKAKRKSPEEESRPPPDLA) is disordered. The segment covering 500–510 (DKEDEDEDEEC) has biased composition (acidic residues). Over residues 518-531 (KSPEEESRPPPDLA) the composition is skewed to basic and acidic residues. Serine 1121 carries the phosphoserine modification.

The protein belongs to the RPAP1 family. In terms of assembly, part of an RNA polymerase II complex that contains POLR2A, POLR2B, POLR2C, POLR2D, POLR2E, POLR2F, POLR2G, POLR2H, POLR2I, POLR2J, POLR2K, POLR2L, RPAP1, FCP1 plus the general transcription factors TFIIB and TFIIF.

It localises to the nucleus. Its function is as follows. Forms an interface between the RNA polymerase II enzyme and chaperone/scaffolding protein, suggesting that it is required to connect RNA polymerase II to regulators of protein complex formation. Required for interaction of the RNA polymerase II complex with acetylated histone H3. This is RNA polymerase II-associated protein 1 (RPAP1) from Homo sapiens (Human).